The sequence spans 295 residues: Glycine N-methyltransferase (295 aa).

S4 and Y6 together coordinate (6S)-5-methyl-5,6,7,8-tetrahydrofolate. A Phosphoserine modification is found at S10. Y22, W31, Y34, and R41 together coordinate S-adenosyl-L-methionine. The residue at position 34 (Y34) is a Phosphotyrosine. An N6-succinyllysine modification is found at K46. Residues A65, 86–88, 117–118, 139–142, and R178 each bind S-adenosyl-L-methionine; these read DAS, NW, and LGNS. K193, K198, and K203 each carry N6-succinyllysine. H217 provides a ligand contact to (6S)-5-methyl-5,6,7,8-tetrahydrofolate. Residue Y223 participates in S-adenosyl-L-methionine binding. (6S)-5-methyl-5,6,7,8-tetrahydrofolate is bound at residue R242.

Belongs to the class I-like SAM-binding methyltransferase superfamily. Glycine N-methyltransferase family. As to quaternary structure, homotetramer. In terms of tissue distribution, abundant in liver.

Its subcellular location is the cytoplasm. It catalyses the reaction glycine + S-adenosyl-L-methionine = sarcosine + S-adenosyl-L-homocysteine + H(+). Its activity is regulated as follows. Inhibited by 5-methyltetrahydrofolate monoglutamate and by 5-methyltetrahydrofolate pentaglutamate, inhibition is much more effective by the pentaglutamate form than by the monoglutamate form. Two molecules of 5-methyltetrahydrofolate are bound per tetramer. The binding sites are localized between subunits. Inhibitor binding may preclude movements of the polypeptide chain that are necessary for enzyme activity. Catalyzes the methylation of glycine by using S-adenosylmethionine (AdoMet) to form N-methylglycine (sarcosine) with the concomitant production of S-adenosylhomocysteine (AdoHcy), a reaction regulated by the binding of 5-methyltetrahydrofolate. Plays an important role in the regulation of methyl group metabolism by regulating the ratio between S-adenosyl-L-methionine and S-adenosyl-L-homocysteine. The chain is Glycine N-methyltransferase (GNMT) from Oryctolagus cuniculus (Rabbit).